The primary structure comprises 218 residues: Large ribosomal subunit protein uL3 (218 aa).

A disordered region spans residues 127-167; the sequence is GFSRGPMSHGSKNHRLPGSIGAGTTPGRVYPGKRMAGRMGG.

It belongs to the universal ribosomal protein uL3 family. Part of the 50S ribosomal subunit. Forms a cluster with proteins L14 and L19.

Its function is as follows. One of the primary rRNA binding proteins, it binds directly near the 3'-end of the 23S rRNA, where it nucleates assembly of the 50S subunit. This is Large ribosomal subunit protein uL3 from Prochlorococcus marinus (strain NATL1A).